The following is a 192-amino-acid chain: Peptidyl-tRNA hydrolase (192 aa).

His17 provides a ligand contact to tRNA. The active-site Proton acceptor is His22. The tRNA site is built by Phe68, Asn70, and Asn116.

This sequence belongs to the PTH family. Monomer.

The protein localises to the cytoplasm. The catalysed reaction is an N-acyl-L-alpha-aminoacyl-tRNA + H2O = an N-acyl-L-amino acid + a tRNA + H(+). Its function is as follows. Hydrolyzes ribosome-free peptidyl-tRNAs (with 1 or more amino acids incorporated), which drop off the ribosome during protein synthesis, or as a result of ribosome stalling. Functionally, catalyzes the release of premature peptidyl moieties from peptidyl-tRNA molecules trapped in stalled 50S ribosomal subunits, and thus maintains levels of free tRNAs and 50S ribosomes. This Stenotrophomonas maltophilia (strain R551-3) protein is Peptidyl-tRNA hydrolase.